Here is a 427-residue protein sequence, read N- to C-terminus: Lactadherin (427 aa).

The signal sequence occupies residues 1–22; the sequence is MQFSRVLAALCGVLLCASGLFA. EGF-like domains follow at residues 24 to 61 and 64 to 108; these read SGDF…LVCN and EKGP…IHCE. 3 disulfide bridges follow: C28–C39, C33–C49, and C51–C60. The N-linked (GlcNAc...) asparagine glycan is linked to N61. 6 cysteine pairs are disulfide-bonded: C68–C79, C73–C96, C98–C107, C111–C267, C254–C258, and C272–C427. The Cell attachment site motif lies at 87-89; sequence RGD. F5/8 type C domains lie at 111 to 267 and 272 to 427; these read CSTK…LLGC and CSEP…LLGC. Residue N230 is glycosylated (N-linked (GlcNAc...) asparagine). N280 and N390 each carry an N-linked (GlcNAc...) asparagine glycan.

As to expression, spleen, lung, heart, brain and muscle.

Its subcellular location is the membrane. It localises to the secreted. The protein resides in the cytoplasmic vesicle. It is found in the secretory vesicle. The protein localises to the acrosome membrane. Functionally, contributes to phagocytic removal of apoptotic cells in many tissues. Plays an important role in the maintenance of intestinal epithelial homeostasis and the promotion of mucosal healing. Promotes VEGF-dependent neovascularization. Specific ligand for the alpha-v/beta-3 and alpha-v/beta-5 receptors. Also binds to phosphatidylserine-enriched cell surfaces in a receptor-independent manner. Zona pellucida-binding protein which may play a role in gamete interaction. Appears to participate in the O-acetylation of GD3 ganglioside sialic acid. The chain is Lactadherin (Mfge8) from Rattus norvegicus (Rat).